The primary structure comprises 397 residues: Subtilisin-like protease 3 (397 aa).

The first 19 residues, 1 to 19 (MGCIKVISVFLAAIAAVDA), serve as a signal peptide directing secretion. Residues 20–116 (RAFFHNRGGS…VEHDRVVKLA (97 aa)) constitute a propeptide that is removed on maturation. Residues 35–116 (SYIVVMKDGV…VEHDRVVKLA (82 aa)) enclose the Inhibitor I9 domain. Positions 126–397 (TWGLGRVSHR…NRLLYNGSGQ (272 aa)) constitute a Peptidase S8 domain. Catalysis depends on charge relay system residues D158 and H189. N-linked (GlcNAc...) asparagine glycosylation occurs at N250. Residue S344 is the Charge relay system of the active site. N393 carries N-linked (GlcNAc...) asparagine glycosylation.

This sequence belongs to the peptidase S8 family.

The protein resides in the secreted. In terms of biological role, secreted subtilisin-like serine protease with keratinolytic activity that contributes to pathogenicity. The protein is Subtilisin-like protease 3 (SUB3) of Trichophyton tonsurans (Scalp ringworm fungus).